We begin with the raw amino-acid sequence, 106 residues long: Small ribosomal subunit protein uS10 (106 aa).

Belongs to the universal ribosomal protein uS10 family. Part of the 30S ribosomal subunit.

Functionally, involved in the binding of tRNA to the ribosomes. This chain is Small ribosomal subunit protein uS10, found in Synechococcus sp. (strain RCC307).